Reading from the N-terminus, the 598-residue chain is Fructan 6-exohydrolase (598 aa).

A signal peptide spans 1–30 (MAARLPLAACVVAFHLCLLLSSLVRSPSTA). Asp65 is a catalytic residue. 3 N-linked (GlcNAc...) asparagine glycosylation sites follow: Asn93, Asn288, and Asn351. Residues Cys451 and Cys497 are joined by a disulfide bond. An N-linked (GlcNAc...) asparagine glycan is attached at Asn572.

This sequence belongs to the glycosyl hydrolase 32 family. Expressed in leaves, stems, roots and inflorescences. Maximum expression is detected in stems, particularly the penultimate internode.

The enzyme catalyses Hydrolysis of terminal, non-reducing (2-&gt;6)-linked beta-D-fructofuranose residues in fructans.. With respect to regulation, not inhibited by sucrose. Hydrolyzes levan-type beta-(2-&gt;6)-linked fructans to fructose, but not inulin-type beta-(2-&gt;1)-linked fructans. This chain is Fructan 6-exohydrolase, found in Triticum aestivum (Wheat).